A 565-amino-acid polypeptide reads, in one-letter code: Anaphase-promoting complex subunit 7 (565 aa).

TPR repeat units follow at residues 101–134, 169–202, 203–236, 237–270, 339–372, 373–406, 407–441, 442–474, 475–508, and 509–531; these read EIEV…RQRT, LDAI…LDWL, SVWI…LRDN, VDLL…DPYL, VQAL…APCR, LDCY…LGAN, AQTL…RPDY, IKAV…NQSD, CVLH…DPND, and QKSL…TQEE. Lys-229 bears the N6-acetyllysine mark. Residues 513–523 are compositionally biased toward basic and acidic residues; that stretch reads EGMQKMEKEES. Positions 513–565 are disordered; it reads EGMQKMEKEESPTDATQEEDVDDMEGSGEEGDLEGSDSEAAQWADQEQWFGMQ. Over residues 528 to 549 the composition is skewed to acidic residues; the sequence is TQEEDVDDMEGSGEEGDLEGSD.

It belongs to the APC7 family. In terms of assembly, V-shaped homodimer. The mammalian APC/C is composed at least of 14 distinct subunits ANAPC1, ANAPC2, CDC27/APC3, ANAPC4, ANAPC5, CDC16/APC6, ANAPC7, CDC23/APC8, ANAPC10, ANAPC11, CDC26/APC12, ANAPC13, ANAPC15 and ANAPC16 that assemble into a complex of at least 19 chains with a combined molecular mass of around 1.2 MDa; APC/C interacts with FZR1 and FBXO5.

It is found in the cytoplasm. It localises to the cytoskeleton. The protein localises to the nucleus. Its subcellular location is the spindle. Its pathway is protein modification; protein ubiquitination. Component of the anaphase promoting complex/cyclosome (APC/C), a cell cycle-regulated E3 ubiquitin ligase that controls progression through mitosis and the G1 phase of the cell cycle. The APC/C complex acts by mediating ubiquitination and subsequent degradation of target proteins: it mainly mediates the formation of 'Lys-11'-linked polyubiquitin chains and, to a lower extent, the formation of 'Lys-48'- and 'Lys-63'-linked polyubiquitin chains. The APC/C complex catalyzes assembly of branched 'Lys-11'-/'Lys-48'-linked branched ubiquitin chains on target proteins. APC7 is not required for the assembly of the APC/C complex, but has an enzyme-substrate adapter activity mediating the processive ubiquitination of specific substrates. Involved in brain development through the specific ubiquitination and clearance of MKI67 from constitutive heterochromatin after neuronal progenitors exit mitosis. The polypeptide is Anaphase-promoting complex subunit 7 (Homo sapiens (Human)).